The chain runs to 156 residues: Crossover junction endodeoxyribonuclease RuvC (156 aa).

Active-site residues include Asp-9, Glu-69, and Asp-141. Residues Asp-9, Glu-69, and Asp-141 each contribute to the Mg(2+) site.

This sequence belongs to the RuvC family. Homodimer which binds Holliday junction (HJ) DNA. The HJ becomes 2-fold symmetrical on binding to RuvC with unstacked arms; it has a different conformation from HJ DNA in complex with RuvA. In the full resolvosome a probable DNA-RuvA(4)-RuvB(12)-RuvC(2) complex forms which resolves the HJ. It depends on Mg(2+) as a cofactor.

The protein localises to the cytoplasm. It carries out the reaction Endonucleolytic cleavage at a junction such as a reciprocal single-stranded crossover between two homologous DNA duplexes (Holliday junction).. In terms of biological role, the RuvA-RuvB-RuvC complex processes Holliday junction (HJ) DNA during genetic recombination and DNA repair. Endonuclease that resolves HJ intermediates. Cleaves cruciform DNA by making single-stranded nicks across the HJ at symmetrical positions within the homologous arms, yielding a 5'-phosphate and a 3'-hydroxyl group; requires a central core of homology in the junction. The consensus cleavage sequence is 5'-(A/T)TT(C/G)-3'. Cleavage occurs on the 3'-side of the TT dinucleotide at the point of strand exchange. HJ branch migration catalyzed by RuvA-RuvB allows RuvC to scan DNA until it finds its consensus sequence, where it cleaves and resolves the cruciform DNA. In Acaryochloris marina (strain MBIC 11017), this protein is Crossover junction endodeoxyribonuclease RuvC.